Reading from the N-terminus, the 307-residue chain is uncharacterized protein (307 aa).

This is an uncharacterized protein from Acanthamoeba polyphaga mimivirus (APMV).